Reading from the N-terminus, the 236-residue chain is 2,3,4,5-tetrahydropyridine-2,6-dicarboxylate N-acetyltransferase (236 aa).

It belongs to the transferase hexapeptide repeat family. DapH subfamily.

It carries out the reaction (S)-2,3,4,5-tetrahydrodipicolinate + acetyl-CoA + H2O = L-2-acetamido-6-oxoheptanedioate + CoA. The protein operates within amino-acid biosynthesis; L-lysine biosynthesis via DAP pathway; LL-2,6-diaminopimelate from (S)-tetrahydrodipicolinate (acetylase route): step 1/3. Catalyzes the transfer of an acetyl group from acetyl-CoA to tetrahydrodipicolinate. In Bacillus licheniformis (strain ATCC 14580 / DSM 13 / JCM 2505 / CCUG 7422 / NBRC 12200 / NCIMB 9375 / NCTC 10341 / NRRL NRS-1264 / Gibson 46), this protein is 2,3,4,5-tetrahydropyridine-2,6-dicarboxylate N-acetyltransferase.